Reading from the N-terminus, the 372-residue chain is Chaperone protein DnaJ (372 aa).

One can recognise a J domain in the interval 5-70 (SYYDILGVSK…KKRQAYDQFG (66 aa)). The CR-type zinc-finger motif lies at 140 to 218 (GREYKIEIPR…CGGQGLQEKR (79 aa)). Residues Cys-153, Cys-156, Cys-170, Cys-173, Cys-192, Cys-195, Cys-206, and Cys-209 each contribute to the Zn(2+) site. CXXCXGXG motif repeat units lie at residues 153-160 (CVDCNGSG), 170-177 (CPDCGGSG), 192-199 (CPTCRGKG), and 206-213 (CRSCGGQG).

The protein belongs to the DnaJ family. In terms of assembly, homodimer. It depends on Zn(2+) as a cofactor.

It is found in the cytoplasm. Functionally, participates actively in the response to hyperosmotic and heat shock by preventing the aggregation of stress-denatured proteins and by disaggregating proteins, also in an autonomous, DnaK-independent fashion. Unfolded proteins bind initially to DnaJ; upon interaction with the DnaJ-bound protein, DnaK hydrolyzes its bound ATP, resulting in the formation of a stable complex. GrpE releases ADP from DnaK; ATP binding to DnaK triggers the release of the substrate protein, thus completing the reaction cycle. Several rounds of ATP-dependent interactions between DnaJ, DnaK and GrpE are required for fully efficient folding. Also involved, together with DnaK and GrpE, in the DNA replication of plasmids through activation of initiation proteins. The chain is Chaperone protein DnaJ from Leptospira interrogans serogroup Icterohaemorrhagiae serovar copenhageni (strain Fiocruz L1-130).